A 427-amino-acid polypeptide reads, in one-letter code: Glutamyl-tRNA reductase (427 aa).

Residues 49-52, Ser105, 110-112, and Gln116 contribute to the substrate site; these read TCNR and EPQ. Catalysis depends on Cys50, which acts as the Nucleophile. 185–190 contributes to the NADP(+) binding site; it reads AAGEMN.

This sequence belongs to the glutamyl-tRNA reductase family. Homodimer.

The catalysed reaction is (S)-4-amino-5-oxopentanoate + tRNA(Glu) + NADP(+) = L-glutamyl-tRNA(Glu) + NADPH + H(+). It participates in porphyrin-containing compound metabolism; protoporphyrin-IX biosynthesis; 5-aminolevulinate from L-glutamyl-tRNA(Glu): step 1/2. In terms of biological role, catalyzes the NADPH-dependent reduction of glutamyl-tRNA(Glu) to glutamate 1-semialdehyde (GSA). The sequence is that of Glutamyl-tRNA reductase from Acinetobacter baumannii (strain AB307-0294).